The sequence spans 941 residues: Heat shock protein 70 homolog (941 aa).

The tract at residues 851–887 (ENQPDIPEDSEDSESEDDTTTSKDSESSEITENLALP) is disordered. Residues 856–869 (IPEDSEDSESEDDT) are compositionally biased toward acidic residues.

This sequence belongs to the heat shock protein 70 family.

Its function is as follows. Probable chaperone. This chain is Heat shock protein 70 homolog, found in Acanthamoeba polyphaga (Amoeba).